Consider the following 30-residue polypeptide: Brevinin-2PTa (30 aa).

Residues cysteine 24 and cysteine 30 are joined by a disulfide bond.

In terms of tissue distribution, expressed by the skin glands.

The protein resides in the secreted. Has antibacterial activity against the Gram-positive bacterium S.aureus ATCC 25923 (MIC=18 uM) and the Gram-negative bacterium E.coli ATCC 25726 (MIC=18 uM). The polypeptide is Brevinin-2PTa (Pulchrana picturata (Malaysian fire frog)).